Reading from the N-terminus, the 397-residue chain is Yellow-related salivary protein LJM111 (397 aa).

Positions 1 to 18 (MKLFFFLYTFGLVQTIFG) are cleaved as a signal peptide.

Belongs to the major royal jelly protein family. As to expression, salivary gland (at protein level).

The protein localises to the secreted. In terms of biological role, probably modulates blood feeding of sand flies on vertebrate species by binding and sequestering different mediators involved in the host response. Binds biogenic amines. Binds adrenaline and noradrenaline with high affinity. Binds serotonin. Binds dopamine and octopamine. Exhibits anti-inflammatory effects in the host: reduces IL17A, TNF-alpha (TNF) and IFN-gamma (IFNG) production by host lymph node cells, suppresses expression of MHC-II and CD86, reduces TNF-alpha production and increases IL10 production, in host bone marrow-derived dendritic cells (BMDCs) stimulated by lipopolysaccharides. Reduces pain in mouse mechanical hypernociception model. This chain is Yellow-related salivary protein LJM111, found in Lutzomyia longipalpis (Sand fly).